The primary structure comprises 393 residues: MTAPLIYIVAGEHSGDVLGARLIHALRAINPSIRFAGIGGPRMEECGFQSLFPMHELAVMGLIEILPRVLKLRRRLQQTVQDIETRRPDLVLTIDSPGFCLRLLRAIQPFGIKRVHYVAPQVWAWREHRVKRFPGLWERMLCLLPFEEKWFAERNVPGQFVGHPVLESGADQGDAARFRARHSLADNARVIVLMPGSRANEAGRLLPVYGETLRLLMQNIPTITPVIPLASSTAHTVRGAVSSWPVQPIFITDIADKHDAFAAAEAALTKSGTSTLELAMGGVPMAVTYRVNRITAMMARRLIRVPYVAMVNLLAGREIVPELLQENCTPTKIAAVLTSLMNNAPDTNGMGAADSQKQALKAVVASLHAPNRHASDGLPSSAAAASIMEVLGQ.

The protein belongs to the LpxB family.

The enzyme catalyses a lipid X + a UDP-2-N,3-O-bis[(3R)-3-hydroxyacyl]-alpha-D-glucosamine = a lipid A disaccharide + UDP + H(+). It participates in bacterial outer membrane biogenesis; LPS lipid A biosynthesis. Its function is as follows. Condensation of UDP-2,3-diacylglucosamine and 2,3-diacylglucosamine-1-phosphate to form lipid A disaccharide, a precursor of lipid A, a phosphorylated glycolipid that anchors the lipopolysaccharide to the outer membrane of the cell. The sequence is that of Lipid-A-disaccharide synthase from Granulibacter bethesdensis (strain ATCC BAA-1260 / CGDNIH1).